Reading from the N-terminus, the 311-residue chain is NAD kinase (311 aa).

Catalysis depends on aspartate 88, which acts as the Proton acceptor. Residues 88 to 89 (DG), 162 to 163 (NE), arginine 190, aspartate 192, valine 200, and 203 to 208 (TAHNLS) each bind NAD(+).

This sequence belongs to the NAD kinase family. A divalent metal cation serves as cofactor.

It is found in the cytoplasm. It carries out the reaction NAD(+) + ATP = ADP + NADP(+) + H(+). In terms of biological role, involved in the regulation of the intracellular balance of NAD and NADP, and is a key enzyme in the biosynthesis of NADP. Catalyzes specifically the phosphorylation on 2'-hydroxyl of the adenosine moiety of NAD to yield NADP. This Rhodopirellula baltica (strain DSM 10527 / NCIMB 13988 / SH1) protein is NAD kinase.